Consider the following 438-residue polypeptide: MADYQDKNVVIIGLGLTGLSCVDFFLARGVTPRVMDTRVTPPGLDKLPQEVERHVGGLNDEWLLAADLIVASPGIALAHPSLSAAASAGVEIVGDIELFCREAQAPIVAITGSNGKSTVTTLVGEMAKAAGVNVGVGGNIGLPALMLLDADRELYVLELSSFQLETTSSLQAAAATVLNVTEDHMDRYPFGLQQYRAAKLRVYEKAKVCVVNADDALTMPVRGADERCVSFGVNMGDYHLNRQQGETWLRVKGEKVLNVKEMKLSGQHNYTNALAALALADAVGLPRASSLKALTTFTGLAHRFQLALEHNGVRWINDSKATNVGSTEAALNGLHVDGTLHLLLGGDGKSADFSPLARYLTGDRIRLYCFGRDGAQLAALRPEIAQQTETMEEAMRLLAPHVQPGDMVLLSPACASLDQFKNFEQRGDVFTRLAKELG.

112–118 (GSNGKST) is an ATP binding site.

This sequence belongs to the MurCDEF family.

It localises to the cytoplasm. It carries out the reaction UDP-N-acetyl-alpha-D-muramoyl-L-alanine + D-glutamate + ATP = UDP-N-acetyl-alpha-D-muramoyl-L-alanyl-D-glutamate + ADP + phosphate + H(+). Its pathway is cell wall biogenesis; peptidoglycan biosynthesis. Functionally, cell wall formation. Catalyzes the addition of glutamate to the nucleotide precursor UDP-N-acetylmuramoyl-L-alanine (UMA). The chain is UDP-N-acetylmuramoylalanine--D-glutamate ligase from Salmonella typhi.